The chain runs to 444 residues: Putative zinc metalloprotease XF_1047 (444 aa).

Residue histidine 22 participates in Zn(2+) binding. The active site involves glutamate 23. Residue histidine 26 participates in Zn(2+) binding. Residues 98–120 traverse the membrane as a helical segment; it reads IAIVAAGPLANLLLCMLLLWVLF. One can recognise a PDZ domain in the interval 192–276; the sequence is TLELSKLKQP…DGHPGMIEIR (85 aa). The next 2 membrane-spanning stretches (helical) occupy residues 371 to 393 and 418 to 440; these read VGWFIYFLSLLSLSLAIINLFPI and AMAAGQYIGLALLAGLMGLAFYN.

It belongs to the peptidase M50B family. Zn(2+) serves as cofactor.

It is found in the cell inner membrane. This chain is Putative zinc metalloprotease XF_1047, found in Xylella fastidiosa (strain 9a5c).